The chain runs to 214 residues: Imidazole glycerol phosphate synthase subunit HisH (214 aa).

The region spanning 3-211 (IIAVIDYDMG…VEQVQATLAT (209 aa)) is the Glutamine amidotransferase type-1 domain. Catalysis depends on Cys-81, which acts as the Nucleophile. Residues His-186 and Glu-188 contribute to the active site.

As to quaternary structure, heterodimer of HisH and HisF.

It localises to the cytoplasm. It catalyses the reaction 5-[(5-phospho-1-deoxy-D-ribulos-1-ylimino)methylamino]-1-(5-phospho-beta-D-ribosyl)imidazole-4-carboxamide + L-glutamine = D-erythro-1-(imidazol-4-yl)glycerol 3-phosphate + 5-amino-1-(5-phospho-beta-D-ribosyl)imidazole-4-carboxamide + L-glutamate + H(+). It carries out the reaction L-glutamine + H2O = L-glutamate + NH4(+). The protein operates within amino-acid biosynthesis; L-histidine biosynthesis; L-histidine from 5-phospho-alpha-D-ribose 1-diphosphate: step 5/9. In terms of biological role, IGPS catalyzes the conversion of PRFAR and glutamine to IGP, AICAR and glutamate. The HisH subunit catalyzes the hydrolysis of glutamine to glutamate and ammonia as part of the synthesis of IGP and AICAR. The resulting ammonia molecule is channeled to the active site of HisF. The polypeptide is Imidazole glycerol phosphate synthase subunit HisH (Acaryochloris marina (strain MBIC 11017)).